The primary structure comprises 550 residues: Medium/long-chain-fatty-acid--CoA/3-oxocholest-4-en-26-oate--CoA ligase (550 aa).

ATP is bound by residues 178–186, Asp419, Arg434, and Lys525; that span reads TGGTTGFPK. The tract at residues 525–550 is disordered; sequence KPDYRWAKEQTEARPADDVHAAHVSA.

The protein belongs to the ATP-dependent AMP-binding enzyme family.

It catalyses the reaction a medium-chain fatty acid + ATP + CoA = a medium-chain fatty acyl-CoA + AMP + diphosphate. It carries out the reaction a long-chain fatty acid + ATP + CoA = a long-chain fatty acyl-CoA + AMP + diphosphate. The catalysed reaction is (25S)-3-oxocholest-4-en-26-oate + ATP + CoA = (25S)-3-oxocholest-4-en-26-oyl-CoA + AMP + diphosphate. It participates in lipid metabolism; fatty acid biosynthesis. The protein operates within steroid metabolism; cholesterol metabolism. Its function is as follows. Catalyzes the activation of medium/long-chain fatty acids as acyl-coenzyme A (acyl-CoA), which are then transferred to the multifunctional polyketide synthase (PKS) type III for further chain extension. Also involved in the degradation of cholesterol via the degradation of the side chains of C-24 branched-chain sterols. Catalyzes the ATP-dependent CoA thioesterification of the sterol 3-oxocholest-4-en-26-oate to yield 3-oxocholest-4-en-26-oyl-CoA. The protein is Medium/long-chain-fatty-acid--CoA/3-oxocholest-4-en-26-oate--CoA ligase of Mycobacterium marinum (strain ATCC BAA-535 / M).